The sequence spans 78 residues: Acyl carrier protein (78 aa).

The region spanning 2–77 (SDIADRVKKI…DAIKFLEKNS (76 aa)) is the Carrier domain. Position 37 is an O-(pantetheine 4'-phosphoryl)serine (S37).

The protein belongs to the acyl carrier protein (ACP) family. In terms of processing, 4'-phosphopantetheine is transferred from CoA to a specific serine of apo-ACP by AcpS. This modification is essential for activity because fatty acids are bound in thioester linkage to the sulfhydryl of the prosthetic group.

The protein localises to the cytoplasm. It functions in the pathway lipid metabolism; fatty acid biosynthesis. Carrier of the growing fatty acid chain in fatty acid biosynthesis. The sequence is that of Acyl carrier protein from Methylobacterium sp. (strain 4-46).